The primary structure comprises 331 residues: Cysteine and histidine-rich domain-containing protein 1 (331 aa).

Zn(2+)-binding residues include Cys-5, Cys-10, Cys-24, His-27, Cys-42, Cys-43, Cys-59, His-64, Cys-157, Cys-162, Cys-176, His-179, Cys-194, Cys-195, Cys-211, and His-216. 2 CHORD domains span residues 5 to 64 (CYNR…KGLH) and 157 to 216 (CKNA…TGTH). In terms of domain architecture, CS spans 227-316 (VVPCRHDWHQ…AEPLLWASLE (90 aa)).

Regulates centrosome duplication. In Gallus gallus (Chicken), this protein is Cysteine and histidine-rich domain-containing protein 1 (CHORDC1).